Here is a 431-residue protein sequence, read N- to C-terminus: MVPTRNRPMLRILGFFICAAFIYLSFRDLWLNHKGKAKLGFVKRNGTQFVVDDKPLYVNGWNSYWFMDHAVDEHSRNLVGEMLEAGAKMGLTVCRTWAFNDGGYNALQISPGRFDERVFQALDHVIAEARKHDVRLLLSLVNNLQAYGGKTQYVKWAWQEGVGLSSSNDSFFFDPSIRNYFKNYLKVLLTRKNSVTGIEYRNDPTIFAWELINEPRCTTDVSGKTLQDWIDEMTGFIKSIDDKHLLTVGLEGFYGPNSPKGLTVNPEQWASQLGTDFVQNSNSSNIDFASVHIYPDHWFHNQTFEEKLKFVVKWMQSHIEDGLKELKKPVLFTEFGLSNQNKDYEPSQRDKFYRIIFDVVYKSAKRKKSGAGTLVWQLFMEGMETFNDDFGIVPHEQDSIYKLMIEQSCRLGKVTGRLKEQKLKELCSHRH.

Positions 1-24 are cleaved as a signal peptide; that stretch reads MVPTRNRPMLRILGFFICAAFIYL. The N-linked (GlcNAc...) asparagine glycan is linked to Asn45. Trp97 is a binding site for substrate. N-linked (GlcNAc...) asparagine glycosylation is present at Asn168. Substrate is bound at residue Asn213. Glu214 (proton donor) is an active-site residue. Asn282 is a glycosylation site (N-linked (GlcNAc...) asparagine). Tyr294 serves as a coordination point for substrate. Asn301 is a glycosylation site (N-linked (GlcNAc...) asparagine). Glu334 acts as the Nucleophile in catalysis. Trp376 is a binding site for substrate.

It belongs to the glycosyl hydrolase 5 (cellulase A) family. Expressed in stems.

It localises to the secreted. It carries out the reaction Random hydrolysis of (1-&gt;4)-beta-D-mannosidic linkages in mannans, galactomannans and glucomannans.. The chain is Mannan endo-1,4-beta-mannosidase 5 (MAN5) from Arabidopsis thaliana (Mouse-ear cress).